A 194-amino-acid chain; its full sequence is MSEVAQNSPAEVQAKKVVYCGVCTLPPEYCEFGGTAKKCEEWLKDNHAELYQRLYSEEALSSNLSELSVSVRERAAKDAAKKEAKAAAAEARDAERKAAAKVQIKRVERNKRKHVTVITGLEVHGLENKKVAKELGKKFATGSSVTKSPAGVEEITVQGDVSEDVKEWLLELYGKEIPESNIELVEDKKKKTSG.

Residues 102–173 (VQIKRVERNK…DVKEWLLELY (72 aa)) form the SUI1 domain.

It belongs to the DENR family. In terms of assembly, interacts with the 40S ribosomal subunit.

It is found in the cytoplasm. The protein is Translation machinery-associated protein 22 (tma22) of Aspergillus fumigatus (strain ATCC MYA-4609 / CBS 101355 / FGSC A1100 / Af293) (Neosartorya fumigata).